A 259-amino-acid chain; its full sequence is Protein IQ-DOMAIN 10 (259 aa).

The segment at 18–39 is disordered; it reads KNKSNRGNVHSETSNRVKPVES. Residues 50 to 77 form the IQ domain; it reads EVAVIRIQKAFRAFKARKRLCSLKSARR. Residues 61 to 71 are calmodulin-binding; the sequence is RAFKARKRLCS. The disordered stretch occupies residues 226 to 259; sequence KPSKKPEKSSPNNVITKTSAKPDEVGNSKKPGSG.

Belongs to the IQD family. In terms of assembly, binds to multiple calmodulin (CaM) in the presence of Ca(2+) and CaM-like proteins.

It is found in the nucleus. The protein localises to the cytoplasm. Its subcellular location is the cytoskeleton. In terms of biological role, may be involved in cooperative interactions with calmodulins or calmodulin-like proteins. Recruits calmodulin proteins to microtubules, thus being a potential scaffold in cellular signaling and trafficking. May associate with nucleic acids and regulate gene expression at the transcriptional or post-transcriptional level. This Arabidopsis thaliana (Mouse-ear cress) protein is Protein IQ-DOMAIN 10.